Reading from the N-terminus, the 112-residue chain is Large ribosomal subunit protein uL18 (112 aa).

The protein belongs to the universal ribosomal protein uL18 family. As to quaternary structure, part of the 50S ribosomal subunit; part of the 5S rRNA/L5/L18/L25 subcomplex. Contacts the 5S and 23S rRNAs.

In terms of biological role, this is one of the proteins that bind and probably mediate the attachment of the 5S RNA into the large ribosomal subunit, where it forms part of the central protuberance. The protein is Large ribosomal subunit protein uL18 of Thermus thermophilus (strain ATCC BAA-163 / DSM 7039 / HB27).